A 714-amino-acid polypeptide reads, in one-letter code: Fatty acid oxidation complex subunit alpha (714 aa).

An enoyl-CoA hydratase region spans residues 1-190 (MEMTSAFTLN…KLGLVDDVVP (190 aa)). A 3-hydroxyacyl-CoA dehydrogenase region spans residues 306-714 (APLNSVGILG…FWKTTATDLQ (409 aa)).

In the N-terminal section; belongs to the enoyl-CoA hydratase/isomerase family. This sequence in the central section; belongs to the 3-hydroxyacyl-CoA dehydrogenase family. As to quaternary structure, heterotetramer of two alpha chains (FadJ) and two beta chains (FadI).

The protein resides in the cytoplasm. The catalysed reaction is a (3S)-3-hydroxyacyl-CoA = a (2E)-enoyl-CoA + H2O. It carries out the reaction a 4-saturated-(3S)-3-hydroxyacyl-CoA = a (3E)-enoyl-CoA + H2O. The enzyme catalyses a (3S)-3-hydroxyacyl-CoA + NAD(+) = a 3-oxoacyl-CoA + NADH + H(+). It catalyses the reaction (3S)-3-hydroxybutanoyl-CoA = (3R)-3-hydroxybutanoyl-CoA. It participates in lipid metabolism; fatty acid beta-oxidation. Its function is as follows. Catalyzes the formation of a hydroxyacyl-CoA by addition of water on enoyl-CoA. Also exhibits 3-hydroxyacyl-CoA epimerase and 3-hydroxyacyl-CoA dehydrogenase activities. The protein is Fatty acid oxidation complex subunit alpha of Escherichia coli O8 (strain IAI1).